A 447-amino-acid polypeptide reads, in one-letter code: UDP-N-acetylmuramoylalanine--D-glutamate ligase (447 aa).

112 to 118 (GTNGKST) contacts ATP.

The protein belongs to the MurCDEF family.

The protein resides in the cytoplasm. It carries out the reaction UDP-N-acetyl-alpha-D-muramoyl-L-alanine + D-glutamate + ATP = UDP-N-acetyl-alpha-D-muramoyl-L-alanyl-D-glutamate + ADP + phosphate + H(+). Its pathway is cell wall biogenesis; peptidoglycan biosynthesis. Functionally, cell wall formation. Catalyzes the addition of glutamate to the nucleotide precursor UDP-N-acetylmuramoyl-L-alanine (UMA). In Legionella pneumophila subsp. pneumophila (strain Philadelphia 1 / ATCC 33152 / DSM 7513), this protein is UDP-N-acetylmuramoylalanine--D-glutamate ligase.